The primary structure comprises 447 residues: Methylenetetrahydrofolate--tRNA-(uracil-5-)-methyltransferase TrmFO (447 aa).

Position 10-15 (10-15) interacts with FAD; the sequence is GAGLAG.

This sequence belongs to the MnmG family. TrmFO subfamily. FAD is required as a cofactor.

Its subcellular location is the cytoplasm. The enzyme catalyses uridine(54) in tRNA + (6R)-5,10-methylene-5,6,7,8-tetrahydrofolate + NADH + H(+) = 5-methyluridine(54) in tRNA + (6S)-5,6,7,8-tetrahydrofolate + NAD(+). It carries out the reaction uridine(54) in tRNA + (6R)-5,10-methylene-5,6,7,8-tetrahydrofolate + NADPH + H(+) = 5-methyluridine(54) in tRNA + (6S)-5,6,7,8-tetrahydrofolate + NADP(+). Its function is as follows. Catalyzes the folate-dependent formation of 5-methyl-uridine at position 54 (M-5-U54) in all tRNAs. This chain is Methylenetetrahydrofolate--tRNA-(uracil-5-)-methyltransferase TrmFO, found in Symbiobacterium thermophilum (strain DSM 24528 / JCM 14929 / IAM 14863 / T).